A 508-amino-acid chain; its full sequence is Anthranilate synthase component 1 (508 aa).

L-tryptophan contacts are provided by residues Ser-49 and 282–284 (PYM). Residue 317 to 318 (GT) participates in chorismate binding. Glu-344 is a Mg(2+) binding site. Chorismate-binding positions include Tyr-432, Arg-452, 466–468 (GAG), and Gly-468. Residue Glu-481 coordinates Mg(2+).

It belongs to the anthranilate synthase component I family. As to quaternary structure, heterotetramer consisting of two non-identical subunits: a beta subunit (TrpG) and a large alpha subunit (TrpE). Mg(2+) is required as a cofactor.

The enzyme catalyses chorismate + L-glutamine = anthranilate + pyruvate + L-glutamate + H(+). It functions in the pathway amino-acid biosynthesis; L-tryptophan biosynthesis; L-tryptophan from chorismate: step 1/5. With respect to regulation, feedback inhibited by tryptophan. Part of a heterotetrameric complex that catalyzes the two-step biosynthesis of anthranilate, an intermediate in the biosynthesis of L-tryptophan. In the first step, the glutamine-binding beta subunit (TrpG) of anthranilate synthase (AS) provides the glutamine amidotransferase activity which generates ammonia as a substrate that, along with chorismate, is used in the second step, catalyzed by the large alpha subunit of AS (TrpE) to produce anthranilate. In the absence of TrpG, TrpE can synthesize anthranilate directly from chorismate and high concentrations of ammonia. This Geobacillus stearothermophilus (Bacillus stearothermophilus) protein is Anthranilate synthase component 1 (trpE).